The primary structure comprises 398 residues: Phosphoglycerate kinase (398 aa).

Residues 23–25 (DFN), arginine 38, 61–64 (HMGK), arginine 122, and arginine 155 contribute to the substrate site. ATP-binding positions include lysine 206, glycine 297, glutamate 328, and 354–357 (GGDS).

Belongs to the phosphoglycerate kinase family. In terms of assembly, monomer.

The protein localises to the cytoplasm. The enzyme catalyses (2R)-3-phosphoglycerate + ATP = (2R)-3-phospho-glyceroyl phosphate + ADP. The protein operates within carbohydrate degradation; glycolysis; pyruvate from D-glyceraldehyde 3-phosphate: step 2/5. In Clostridium botulinum (strain Loch Maree / Type A3), this protein is Phosphoglycerate kinase.